The chain runs to 177 residues: Anti-apoptotic protein NR13 (177 aa).

Positions 75 to 94 (LEAEGGLNWGRLLALVVFTG) match the BH1 motif. The helical transmembrane segment at 86-106 (LLALVVFTGTLAAALAESGCE) threads the bilayer. Residues 126–141 (EWLEEHGGWDGFCRFF) carry the BH2 motif. The chain crosses the membrane as a helical span at residues 156–176 (SNAIMAAAGFGIAGLAFLLVV).

Belongs to the Bcl-2 family. Interacts with BAX. Expressed preferentially in heart, skeletal muscle, retina, optical tectum and bursa of Fabricius.

It is found in the cell membrane. Functionally, shows anti-apoptotic properties. Counteract the pro-apoptotic activity of BAX. The sequence is that of Anti-apoptotic protein NR13 (NR13) from Gallus gallus (Chicken).